The chain runs to 146 residues: MLSQEFFNSFITIYRPYLKLAEPILEKHNIYYGQWLILRDIAKHQPTTLIEISHRRAIEKPTARKTLKALIENDLITVENSLEDKRQKFLTLTPKGHELYEIVCLDVQKLQQAVVAKTNISQDQMQETINVMNQIHEILLKEAHND.

In terms of domain architecture, HTH marR-type spans 1 to 137 (MLSQEFFNSF…TINVMNQIHE (137 aa)).

This is an uncharacterized protein from Staphylococcus aureus (strain N315).